The primary structure comprises 872 residues: Valine--tRNA ligase (872 aa).

The 'HIGH' region signature appears at Pro49–His59. Positions Lys531–Ser535 match the 'KMSKS' region motif. Lys534 is an ATP binding site. Positions Pro810–Gln871 form a coiled coil.

This sequence belongs to the class-I aminoacyl-tRNA synthetase family. ValS type 1 subfamily. In terms of assembly, monomer.

The protein resides in the cytoplasm. The enzyme catalyses tRNA(Val) + L-valine + ATP = L-valyl-tRNA(Val) + AMP + diphosphate. Functionally, catalyzes the attachment of valine to tRNA(Val). As ValRS can inadvertently accommodate and process structurally similar amino acids such as threonine, to avoid such errors, it has a 'posttransfer' editing activity that hydrolyzes mischarged Thr-tRNA(Val) in a tRNA-dependent manner. This is Valine--tRNA ligase from Helicobacter pylori (strain J99 / ATCC 700824) (Campylobacter pylori J99).